The following is a 272-amino-acid chain: Tropinone reductase-like 1 (272 aa).

17–41 (IITGGASGIGACTAELFHENGAKVV) is an NAD(+) binding site. A substrate-binding site is contributed by Ser-150. Residue Tyr-163 is the Proton acceptor of the active site.

Belongs to the short-chain dehydrogenases/reductases (SDR) family.

Functionally, has no tropinone reductase activity. The chain is Tropinone reductase-like 1 from Erythroxylum coca (Coca plant).